A 274-amino-acid chain; its full sequence is Penicillin-insensitive murein endopeptidase (274 aa).

The first 19 residues, 1-19 (MKKTAIALLAWFVSSASLA), serve as a signal peptide directing secretion. 3 disulfides stabilise this stretch: C44–C265, C187–C235, and C216–C223. Residues H110, H113, D120, D147, H150, and H211 each coordinate Zn(2+). The segment at 225–274 (DQPLPPPGDGCGAELQSWFEPPKPGTTKPEKKTPPPLPPSCQALLDEHVL) is disordered.

This sequence belongs to the peptidase M74 family. Dimer. The cofactor is Zn(2+).

It localises to the periplasm. In terms of biological role, murein endopeptidase that cleaves the D-alanyl-meso-2,6-diamino-pimelyl amide bond that connects peptidoglycan strands. Likely plays a role in the removal of murein from the sacculus. The polypeptide is Penicillin-insensitive murein endopeptidase (Salmonella agona (strain SL483)).